The primary structure comprises 465 residues: Sodium-dependent phosphate transport protein 1 (465 aa).

Residues Asn-39, Asn-47, and Asn-56 are each glycosylated (N-linked (GlcNAc...) asparagine). Helical transmembrane passes span 79–99, 117–137, 176–196, 199–219, 260–280, 299–319, 337–357, 363–383, 399–419, and 431–451; these read GLVLSSVFLGMVVIQVPVGYL, SVLSLLIPPAAQVGAALVIVC, FVMGPFIALLVSGFICDLLGW, VFYIFGIVGCVLSLFWFILLF, LPLWAIILNSFAFIWSNNLLV, GLLSSLPYLLAYICGIVAGQM, LFTTLGIFCPVIFVVCLLYLS, TVIFLTLANSTLSFSFCGQLI, VTALIGIFGGLISSTLAGLIL, and FFLMAGINVTCLAFYLLFAKG.

The protein belongs to the major facilitator superfamily. Sodium/anion cotransporter family. Interacts with PDZK1.

It localises to the apical cell membrane. It catalyses the reaction 3 Na(+)(out) + phosphate(out) = 3 Na(+)(in) + phosphate(in). The catalysed reaction is urate(out) = urate(in). Important for the resorption of phosphate by the kidney. May be involved in actively transporting phosphate into cells via Na(+) cotransport in the renal brush border membrane. Plays a role in urate transport in the kidney. The protein is Sodium-dependent phosphate transport protein 1 (Slc17a1) of Rattus norvegicus (Rat).